Here is a 62-residue protein sequence, read N- to C-terminus: Small ribosomal subunit protein eS27 (62 aa).

Residues C17, C20, C36, and C39 each contribute to the Zn(2+) site. The C4-type zinc finger occupies 17-39; the sequence is CNDCENEQIIFGSASRKITCVVC.

It belongs to the eukaryotic ribosomal protein eS27 family. As to quaternary structure, part of the 30S ribosomal subunit. Zn(2+) is required as a cofactor.

The sequence is that of Small ribosomal subunit protein eS27 from Methanosarcina barkeri (strain Fusaro / DSM 804).